Reading from the N-terminus, the 165-residue chain is MTVTLAGNPIEVGGHFPQVGEIVENFILVGNDLADVALNDFASKRKVLNIFPSIDTGVCATSVRKFNQQAAKLSNTIVLCISADLPFAQARFCGAEGIENAKTVSTFRNHALHSQLGVDIQTGPLAGLTSRAVIVLDEQNNVLHSQLVEEIKEEPNYEAALAVLA.

Positions 17–165 (PQVGEIVENF…NYEAALAVLA (149 aa)) constitute a Thioredoxin domain. The active-site Cysteine sulfenic acid (-SOH) intermediate is the cysteine 59. A disulfide bridge connects residues cysteine 59 and cysteine 93.

Belongs to the peroxiredoxin family. Tpx subfamily. As to quaternary structure, homodimer.

It catalyses the reaction a hydroperoxide + [thioredoxin]-dithiol = an alcohol + [thioredoxin]-disulfide + H2O. Functionally, thiol-specific peroxidase that catalyzes the reduction of hydrogen peroxide and organic hydroperoxides to water and alcohols, respectively. Plays a role in cell protection against oxidative stress by detoxifying peroxides. The polypeptide is Thiol peroxidase (Haemophilus influenzae (strain ATCC 51907 / DSM 11121 / KW20 / Rd)).